A 312-amino-acid polypeptide reads, in one-letter code: Homoserine O-succinyltransferase (312 aa).

C142 functions as the Acyl-thioester intermediate in the catalytic mechanism. Substrate-binding residues include K163 and S192. H235 serves as the catalytic Proton acceptor. E237 is a catalytic residue. R249 contributes to the substrate binding site.

It belongs to the MetA family.

It localises to the cytoplasm. The catalysed reaction is L-homoserine + succinyl-CoA = O-succinyl-L-homoserine + CoA. Its pathway is amino-acid biosynthesis; L-methionine biosynthesis via de novo pathway; O-succinyl-L-homoserine from L-homoserine: step 1/1. Functionally, transfers a succinyl group from succinyl-CoA to L-homoserine, forming succinyl-L-homoserine. The sequence is that of Homoserine O-succinyltransferase from Shewanella halifaxensis (strain HAW-EB4).